The sequence spans 130 residues: UPF0102 protein RPE_0358 (130 aa).

The protein belongs to the UPF0102 family.

This chain is UPF0102 protein RPE_0358, found in Rhodopseudomonas palustris (strain BisA53).